A 341-amino-acid chain; its full sequence is Anthranilate phosphoribosyltransferase (341 aa).

Residues Gly-81, 84–85, Thr-89, 91–94, 109–117, and Ser-121 contribute to the 5-phospho-alpha-D-ribose 1-diphosphate site; these read GD, NIST, and KHGSRSVSG. Anthranilate is bound at residue Gly-81. Residue Ser-93 coordinates Mg(2+). Arg-167 provides a ligand contact to anthranilate. Mg(2+)-binding residues include Asp-226 and Glu-227.

It belongs to the anthranilate phosphoribosyltransferase family. In terms of assembly, homodimer. It depends on Mg(2+) as a cofactor.

The catalysed reaction is N-(5-phospho-beta-D-ribosyl)anthranilate + diphosphate = 5-phospho-alpha-D-ribose 1-diphosphate + anthranilate. The protein operates within amino-acid biosynthesis; L-tryptophan biosynthesis; L-tryptophan from chorismate: step 2/5. Functionally, catalyzes the transfer of the phosphoribosyl group of 5-phosphorylribose-1-pyrophosphate (PRPP) to anthranilate to yield N-(5'-phosphoribosyl)-anthranilate (PRA). The chain is Anthranilate phosphoribosyltransferase from Methylococcus capsulatus (strain ATCC 33009 / NCIMB 11132 / Bath).